The primary structure comprises 400 residues: Exodeoxyribonuclease 7 large subunit (400 aa).

Belongs to the XseA family. As to quaternary structure, heterooligomer composed of large and small subunits.

It localises to the cytoplasm. The enzyme catalyses Exonucleolytic cleavage in either 5'- to 3'- or 3'- to 5'-direction to yield nucleoside 5'-phosphates.. Functionally, bidirectionally degrades single-stranded DNA into large acid-insoluble oligonucleotides, which are then degraded further into small acid-soluble oligonucleotides. The polypeptide is Exodeoxyribonuclease 7 large subunit (Clostridium perfringens (strain ATCC 13124 / DSM 756 / JCM 1290 / NCIMB 6125 / NCTC 8237 / Type A)).